The chain runs to 362 residues: Serpentine receptor class epsilon-37 (362 aa).

Transmembrane regions (helical) follow at residues 29 to 49 (IFYV…YILV), 67 to 87 (IMMC…IVLI), 127 to 147 (IYFA…AVLA), 170 to 190 (IPIL…YQTT), 204 to 224 (IFIG…NLAW), 260 to 280 (LVVS…VLLF), and 288 to 308 (FFVH…SLTL).

The protein belongs to the nematode receptor-like protein sre family.

The protein resides in the membrane. The polypeptide is Serpentine receptor class epsilon-37 (sre-37) (Caenorhabditis elegans).